Here is a 492-residue protein sequence, read N- to C-terminus: Lipopolysaccharide biosynthesis protein WzxC (492 aa).

At 1-12 (MSLREKTISGAK) the chain is on the cytoplasmic side. The helical transmembrane segment at 13-33 (WSAIATVIIIGLGLVQMTVLA) threads the bilayer. Topologically, residues 34-42 (RIIDNHQFG) are periplasmic. The chain crosses the membrane as a helical span at residues 43–63 (LLTVSLVIIALADTLSDFGIA). Topologically, residues 64 to 81 (NSIIQRKEISHLELTTLY) are cytoplasmic. A helical transmembrane segment spans residues 82–102 (WLNVGLGIVVCVAVFLLSDLI). The Periplasmic segment spans residues 103–104 (GD). Residues 105–125 (VLNNPDLAPLIKTLSLAFVVI) form a helical membrane-spanning segment. The Cytoplasmic segment spans residues 126–157 (PHGQQFRALMQKELEFNKIGMIETSAVLAGFT). A helical transmembrane segment spans residues 158–178 (CTVVSAHFWPLAMTAILGYLV). At 179 to 236 (NSAVRTLLFGYFGRKIYRPGLHFSLASVAPNLRFGAWLTADSIINYLNTNLSTLVLAR) the chain is on the periplasmic side. The helical transmembrane segment at 237 to 257 (ILGAGVAGGYNLAYNVAVVPP) threads the bilayer. The Cytoplasmic segment spans residues 258–288 (MKLNPIITRVLFPAFAKIQDDTEKLRVNFYK). The chain crosses the membrane as a helical span at residues 289–309 (LLSVVGIINFPALLGLMVVSN). Residues 310 to 322 (NFVPLVFGEKWNS) lie on the Periplasmic side of the membrane. A helical transmembrane segment spans residues 323-343 (IIPVLQLLCVVGLLRSVGNPI). Residues 344 to 364 (GSLLMAKARVDISFKFNVFKT) lie on the Cytoplasmic side of the membrane. Residues 365–385 (FLFIPAIVIGGQMAGAIGVTL) traverse the membrane as a helical segment. A topological domain (periplasmic) is located at residue glycine 386. The helical transmembrane segment at 387–407 (FLLVQIINTILSYFVMIKPVL) threads the bilayer. The Cytoplasmic segment spans residues 408-417 (GSSYRQYILS). Residues 418–438 (LWLPFYLSLPTLVVSYALGIV) form a helical membrane-spanning segment. At 439–445 (LKGQLAL) the chain is on the periplasmic side. A helical transmembrane segment spans residues 446–466 (GMLLAVQIATGVLAFVVMIVL). The Cytoplasmic segment spans residues 467–492 (SRHPLVVEVKRQFCRSEKMKMLLRAG).

This sequence belongs to the polysaccharide synthase family.

The protein resides in the cell inner membrane. It participates in bacterial outer membrane biogenesis; lipopolysaccharide biosynthesis. The protein is Lipopolysaccharide biosynthesis protein WzxC (wzxC) of Escherichia coli (strain K12).